The sequence spans 376 residues: Probable dual-specificity RNA methyltransferase RlmN (376 aa).

The Proton acceptor role is filled by glutamate 96. Residues 102 to 346 (YPDRSTVCVS…CTVRVERGVE (245 aa)) form the Radical SAM core domain. The cysteines at positions 109 and 351 are disulfide-linked. Positions 116, 120, and 123 each coordinate [4Fe-4S] cluster. S-adenosyl-L-methionine is bound by residues 171–172 (GE), serine 203, 226–228 (SLH), and asparagine 308. The S-methylcysteine intermediate role is filled by cysteine 351.

Belongs to the radical SAM superfamily. RlmN family. [4Fe-4S] cluster serves as cofactor.

It localises to the cytoplasm. It carries out the reaction adenosine(2503) in 23S rRNA + 2 reduced [2Fe-2S]-[ferredoxin] + 2 S-adenosyl-L-methionine = 2-methyladenosine(2503) in 23S rRNA + 5'-deoxyadenosine + L-methionine + 2 oxidized [2Fe-2S]-[ferredoxin] + S-adenosyl-L-homocysteine. The catalysed reaction is adenosine(37) in tRNA + 2 reduced [2Fe-2S]-[ferredoxin] + 2 S-adenosyl-L-methionine = 2-methyladenosine(37) in tRNA + 5'-deoxyadenosine + L-methionine + 2 oxidized [2Fe-2S]-[ferredoxin] + S-adenosyl-L-homocysteine. Specifically methylates position 2 of adenine 2503 in 23S rRNA and position 2 of adenine 37 in tRNAs. The protein is Probable dual-specificity RNA methyltransferase RlmN of Chloroflexus aurantiacus (strain ATCC 29366 / DSM 635 / J-10-fl).